The sequence spans 500 residues: Aldehyde dehydrogenase (500 aa).

Position 246–251 (246–251 (GSTLVG)) interacts with NAD(+). Glu-269 acts as the Proton acceptor in catalysis. The active-site Nucleophile is Cys-303.

Belongs to the aldehyde dehydrogenase family.

It carries out the reaction an aldehyde + NAD(+) + H2O = a carboxylate + NADH + 2 H(+). It participates in alcohol metabolism; ethanol degradation; acetate from ethanol: step 2/2. The chain is Aldehyde dehydrogenase (aldA) from Agaricus bisporus (White button mushroom).